A 151-amino-acid chain; its full sequence is UPF0208 membrane protein ECA3038 (151 aa).

2 helical membrane-spanning segments follow: residues 46–66 (FGIR…IALG) and 69–89 (LGPA…GLWW).

It belongs to the UPF0208 family.

It localises to the cell inner membrane. This Pectobacterium atrosepticum (strain SCRI 1043 / ATCC BAA-672) (Erwinia carotovora subsp. atroseptica) protein is UPF0208 membrane protein ECA3038.